The following is a 1408-amino-acid chain: DNA-directed RNA polymerase subunit beta (1408 aa).

The interval 1383–1408 is disordered; that stretch reads PERQRSFGGDFLGGGDGEERKTGTEA. Residues 1399–1408 are compositionally biased toward basic and acidic residues; that stretch reads GEERKTGTEA.

It belongs to the RNA polymerase beta chain family. As to quaternary structure, the RNAP catalytic core consists of 2 alpha, 1 beta, 1 beta' and 1 omega subunit. When a sigma factor is associated with the core the holoenzyme is formed, which can initiate transcription.

The catalysed reaction is RNA(n) + a ribonucleoside 5'-triphosphate = RNA(n+1) + diphosphate. In terms of biological role, DNA-dependent RNA polymerase catalyzes the transcription of DNA into RNA using the four ribonucleoside triphosphates as substrates. The protein is DNA-directed RNA polymerase subunit beta of Myxococcus xanthus (strain DK1622).